Reading from the N-terminus, the 220-residue chain is Deoxyribose-phosphate aldolase (220 aa).

Asp89 serves as the catalytic Proton donor/acceptor. The active-site Schiff-base intermediate with acetaldehyde is the Lys151. Lys180 functions as the Proton donor/acceptor in the catalytic mechanism.

It belongs to the DeoC/FbaB aldolase family. DeoC type 1 subfamily.

The protein resides in the cytoplasm. The catalysed reaction is 2-deoxy-D-ribose 5-phosphate = D-glyceraldehyde 3-phosphate + acetaldehyde. It functions in the pathway carbohydrate degradation; 2-deoxy-D-ribose 1-phosphate degradation; D-glyceraldehyde 3-phosphate and acetaldehyde from 2-deoxy-alpha-D-ribose 1-phosphate: step 2/2. Its function is as follows. Catalyzes a reversible aldol reaction between acetaldehyde and D-glyceraldehyde 3-phosphate to generate 2-deoxy-D-ribose 5-phosphate. The polypeptide is Deoxyribose-phosphate aldolase (Streptococcus equi subsp. equi (strain 4047)).